Here is a 159-residue protein sequence, read N- to C-terminus: uncharacterized protein (159 aa).

This is an uncharacterized protein from Acanthamoeba polyphaga (Amoeba).